Reading from the N-terminus, the 503-residue chain is Glutamate/gamma-aminobutyrate antiporter (503 aa).

33–43 is a binding site for L-glutamate; it reads LHLVFFLLLGG. Helical transmembrane passes span 35-55, 153-173, 194-214, 232-252, 366-386, 407-427, and 440-460; these read LVFF…LCAA, FVVG…AYFI, VSTL…EASA, ILLV…VAAV, LTVV…FVLI, IIAG…FVPP, and MILL…YELH.

It belongs to the amino acid-polyamine-organocation (APC) superfamily. Glutamate:GABA antiporter (GGA) (TC 2.A.3.7) family.

The protein localises to the cell membrane. The catalysed reaction is 4-aminobutanoate(in) + L-glutamate(out) = 4-aminobutanoate(out) + L-glutamate(in). In terms of biological role, involved in glutaminase-dependent acid resistance. Exchanges extracellular glutamate (Glu) for intracellular gamma-aminobutyric acid (GABA) under acidic conditions. In Lactococcus lactis subsp. cremoris (strain MG1363), this protein is Glutamate/gamma-aminobutyrate antiporter.